A 321-amino-acid chain; its full sequence is Sideroflexin-3 (321 aa).

M1 is subject to N-acetylmethionine. Transmembrane regions (helical) follow at residues 146–164, 174–194, 225–245, and 266–286; these read LGTA…ALGL, LVGR…NIPL, IFQV…IPPV, and LQVG…CALF.

It belongs to the sideroflexin family.

It localises to the mitochondrion membrane. It catalyses the reaction L-serine(in) = L-serine(out). Its function is as follows. Mitochondrial serine transporter that mediates transport of serine into mitochondria, an important step of the one-carbon metabolism pathway. Mitochondrial serine is converted to glycine and formate, which then exits to the cytosol where it is used to generate the charged folates that serve as one-carbon donors. In Rattus norvegicus (Rat), this protein is Sideroflexin-3 (Sfxn3).